The following is a 1120-amino-acid chain: Transcription-repair-coupling factor (1120 aa).

Residues 591–756 (DLTNGMLMDR…LTGLKELSII (166 aa)) form the Helicase ATP-binding domain. ATP is bound at residue 604 to 611 (GDVGFGKT). The DEEQ box motif lies at 709–712 (DEEQ). Residues 777-933 (IIRDALLREH…TIASHDADLR (157 aa)) enclose the Helicase C-terminal domain.

The protein in the N-terminal section; belongs to the UvrB family. This sequence in the C-terminal section; belongs to the helicase family. RecG subfamily.

Its subcellular location is the cytoplasm. Functionally, couples transcription and DNA repair by recognizing RNA polymerase (RNAP) stalled at DNA lesions. Mediates ATP-dependent release of RNAP and its truncated transcript from the DNA, and recruitment of nucleotide excision repair machinery to the damaged site. This Rickettsia typhi (strain ATCC VR-144 / Wilmington) protein is Transcription-repair-coupling factor.